Consider the following 218-residue polypeptide: Claudin-3 (218 aa).

At 1-8 the chain is on the cytoplasmic side; the sequence is MSMGLEIA. Residues 9 to 29 form a helical membrane-spanning segment; that stretch reads GTSLAVLGWLSTIVCCALPMW. At 30 to 80 the chain is on the extracellular side; sequence RVTAFIGSSIITAQITWEGLWMNCVVQSTGQMQCKVYDSLLALPQDLQAAR. The helical transmembrane segment at 81–101 threads the bilayer; the sequence is ALIVVSILLAAFGLLVALVGA. At 102–115 the chain is on the cytoplasmic side; the sequence is QCTNCVQDDTAKAK. A helical transmembrane segment spans residues 116–136; that stretch reads ITIVAGVLFLLAALLTLVPVS. The Extracellular segment spans residues 137–159; the sequence is WSANTIIRDFYNPLVPDAQKREM. A helical membrane pass occupies residues 160-180; it reads GAGLYVGWAAAALQLLGGALL. Over 181–218 the chain is Cytoplasmic; it reads CCSCPPRDKKYAPTKIVYSAPRSAGPGTSTAYDRKDYV. Tyr-198 is subject to Phosphotyrosine. Phosphoserine occurs at positions 199 and 209. An interactions with TJP1, TJP2 and TJP3 region spans residues 217–218; sequence YV.

The protein belongs to the claudin family. In terms of assembly, can form homo- and heteropolymers with other CLDN. Homopolymers interact with CLDN1 and CLDN2 homopolymers. Interacts in cis (within the same plasma membrane) with CLDN19. Directly interacts with TJP1/ZO-1, TJP2/ZO-2 and TJP3/ZO-3.

The protein localises to the cell junction. It is found in the tight junction. Its subcellular location is the cell membrane. In terms of biological role, plays a major role in tight junction-specific obliteration of the intercellular space, through calcium-independent cell-adhesion activity. The polypeptide is Claudin-3 (CLDN3) (Canis lupus familiaris (Dog)).